Here is a 243-residue protein sequence, read N- to C-terminus: uncharacterized protein (243 aa).

The signal sequence occupies residues 1 to 19; the sequence is MDELALSFSLTCLLPENRA. N136 is a glycosylation site (N-linked (GlcNAc...) asparagine).

It localises to the secreted. This is an uncharacterized protein from Homo sapiens (Human).